The sequence spans 141 residues: ATP synthase epsilon chain 1 (141 aa).

It belongs to the ATPase epsilon chain family. In terms of assembly, F-type ATPases have 2 components, CF(1) - the catalytic core - and CF(0) - the membrane proton channel. CF(1) has five subunits: alpha(3), beta(3), gamma(1), delta(1), epsilon(1). CF(0) has three main subunits: a, b and c.

The protein resides in the cell inner membrane. Its function is as follows. Produces ATP from ADP in the presence of a proton gradient across the membrane. The protein is ATP synthase epsilon chain 1 of Paraburkholderia xenovorans (strain LB400).